Consider the following 239-residue polypeptide: Sugar fermentation stimulation protein homolog (239 aa).

This sequence belongs to the SfsA family.

This is Sugar fermentation stimulation protein homolog from Mannheimia succiniciproducens (strain KCTC 0769BP / MBEL55E).